The primary structure comprises 507 residues: Serine/threonine-protein kinase CBK1 (507 aa).

Residues 1-30 (MQKVSGSGKKTTAFQQRKSDSVYNNNEMNK) are disordered. The region spanning 126 to 431 (FHTVKVIGKG…ANDIKLHPFF (306 aa)) is the Protein kinase domain. Residues 132–140 (IGKGAFGEV) and Lys-155 contribute to the ATP site. The active-site Proton acceptor is Asp-249. The AGC-kinase C-terminal domain occupies 432 to 505 (RGVNWDTIRE…KRFDMMTQKG (74 aa)).

The protein belongs to the protein kinase superfamily. STE Ser/Thr protein kinase family. COT1 subfamily.

It catalyses the reaction L-seryl-[protein] + ATP = O-phospho-L-seryl-[protein] + ADP + H(+). The enzyme catalyses L-threonyl-[protein] + ATP = O-phospho-L-threonyl-[protein] + ADP + H(+). Its function is as follows. Protein kinase that seems to play a role in signaling pathways necessary for cell growth and mating. The sequence is that of Serine/threonine-protein kinase CBK1 (CBK1) from Pneumocystis carinii.